The primary structure comprises 290 residues: Outer dense fiber protein 4 (290 aa).

S28 carries the post-translational modification Phosphoserine. Transmembrane regions (helical) follow at residues 44–64, 132–152, 164–184, and 201–221; these read AQVVASEFSLLAFLLLLLMVF, ISFILAVGLGFVLTVWLHLPY, LIGIILSFCEVTLIFLTLLLF, and IGWSYFIGWLVLILYLTCGIL. The disordered stretch occupies residues 262–290; that stretch reads ADILDPTQDDQKPLSSDNIALPPNPDTTD.

Its subcellular location is the membrane. In terms of biological role, component of the outer dense fibers (ODF) of spermatozoa which could be involved in sperm tail structure, sperm movement and general organization of cellular cytoskeleton. The protein is Outer dense fiber protein 4 (Odf4) of Rattus norvegicus (Rat).